A 436-amino-acid chain; its full sequence is Acetyl-CoA decarbonylase/synthase complex subunit delta 1 (436 aa).

The protein belongs to the CdhD family. Heterodimer of delta and gamma chains. The ACDS complex is made up of alpha, epsilon, beta, gamma and delta chains with a probable stoichiometry of (alpha(2)epsilon(2))(4)-beta(8)-(gamma(1)delta(1))(8) (Potential).

Its pathway is one-carbon metabolism; methanogenesis from acetate. In terms of biological role, part of a complex that catalyzes the reversible cleavage of acetyl-CoA, allowing growth on acetate as sole source of carbon and energy. Probably maintains the overall quaternary structure of the ACDS complex. This chain is Acetyl-CoA decarbonylase/synthase complex subunit delta 1 (cdhD1), found in Methanosarcina acetivorans (strain ATCC 35395 / DSM 2834 / JCM 12185 / C2A).